Reading from the N-terminus, the 170-residue chain is Phosphopantetheine adenylyltransferase (170 aa).

S14 is a substrate binding site. ATP-binding positions include 14–15 (SF) and H22. Substrate is bound by residues K46, L79, and R93. ATP is bound by residues 94-96 (GIR), E104, and 129-135 (IAEVSST).

It belongs to the bacterial CoaD family. In terms of assembly, homohexamer. Mg(2+) is required as a cofactor.

It localises to the cytoplasm. It carries out the reaction (R)-4'-phosphopantetheine + ATP + H(+) = 3'-dephospho-CoA + diphosphate. It functions in the pathway cofactor biosynthesis; coenzyme A biosynthesis; CoA from (R)-pantothenate: step 4/5. Functionally, reversibly transfers an adenylyl group from ATP to 4'-phosphopantetheine, yielding dephospho-CoA (dPCoA) and pyrophosphate. The chain is Phosphopantetheine adenylyltransferase from Neisseria meningitidis serogroup C (strain 053442).